The sequence spans 231 residues: Platelet-activating factor acetylhydrolase IB subunit alpha1 (231 aa).

At Ser-2 the chain carries N-acetylserine. Ser-2 carries the phosphoserine modification. Residues Ser-47, Asp-192, and His-195 contribute to the active site.

This sequence belongs to the 'GDSL' lipolytic enzyme family. Platelet-activating factor acetylhydrolase IB beta/gamma subunits subfamily. As to quaternary structure, forms a catalytic dimer which is either homodimer (alpha1/alpha1 homodimer) or heterodimer with PAFAH1B2 (alpha1/alpha2 heterodimer). Component of the cytosolic (PAF-AH (I)) heterotetrameric enzyme, which is composed of PAFAH1B1 (beta), PAFAH1B2 (alpha2) and PAFAH1B3 (alpha1) subunits. The catalytic activity of the enzyme resides in the alpha1 (PAFAH1B3) and alpha2 (PAFAH1B2) subunits, whereas the beta subunit (PAFAH1B1) has regulatory activity. Trimer formation is not essential for the catalytic activity. Interacts with VLDLR; this interaction may modulate the Reelin pathway. As to expression, in the adult, expressed in brain, skeletal muscle, kidney, thymus, spleen, colon, testis, ovary and peripheral blood leukocytes. In the fetus, highest expression occurs in brain.

The protein localises to the cytoplasm. It catalyses the reaction a 1-O-alkyl-2-acetyl-sn-glycero-3-phosphocholine + H2O = a 1-O-alkyl-sn-glycero-3-phosphocholine + acetate + H(+). The enzyme catalyses 1-O-hexadecyl-2-acetyl-sn-glycero-3-phosphocholine + H2O = 1-O-hexadecyl-sn-glycero-3-phosphocholine + acetate + H(+). The catalysed reaction is 1-O-hexadecyl-2-acetyl-sn-glycero-3-phosphate + H2O = 1-O-hexadecyl-sn-glycero-3-phosphate + acetate + H(+). Beta subunit (PAFAH1B1) inhibits the acetylhydrolase activity of the alpha1/alpha1 catalytic homodimer. Functionally, alpha1 catalytic subunit of the cytosolic type I platelet-activating factor (PAF) acetylhydrolase (PAF-AH (I)) heterotetrameric enzyme that catalyzes the hydrolyze of the acetyl group at the sn-2 position of PAF and its analogs and modulates the action of PAF. The activity and substrate specificity of PAF-AH (I) are affected by its subunit composition. Both alpha1/alpha1 homodimer (PAFAH1B3/PAFAH1B3 homodimer) and alpha1/alpha2 heterodimer(PAFAH1B3/PAFAH1B2 heterodimer) hydrolyze 1-O-alkyl-2-acetyl-sn-glycero-3-phosphoric acid (AAGPA) more efficiently than PAF, but they have little hydrolytic activity towards 1-O-alkyl-2-acetyl-sn-glycero-3-phosphorylethanolamine (AAGPE). Plays an important role during the development of brain. This chain is Platelet-activating factor acetylhydrolase IB subunit alpha1, found in Homo sapiens (Human).